Here is a 1055-residue protein sequence, read N- to C-terminus: Endo-1,4-beta-xylanase A (1055 aa).

Positions 1–29 (MRKKRRGFLNASTAVLVGILAGFLGVVLA) are cleaved as a signal peptide. Positions 30–357 (ATGALGFAVR…TTSAEIKLEM (328 aa)) are a. The GH10 domain maps to 360 to 688 (EEEIPALKDV…KLAYWAIVAP (329 aa)). Glutamate 498 functions as the Proton donor in the catalytic mechanism. Glutamate 604 functions as the Nucleophile in the catalytic mechanism. CBM-cenC domains follow at residues 720 to 851 (PIEI…TNSQ) and 895 to 1040 (KSVA…PTNN).

It belongs to the glycosyl hydrolase 10 (cellulase F) family.

The enzyme catalyses Endohydrolysis of (1-&gt;4)-beta-D-xylosidic linkages in xylans.. This chain is Endo-1,4-beta-xylanase A (xynA), found in Thermotoga neapolitana.